A 414-amino-acid polypeptide reads, in one-letter code: MAGCVVGEPASAPGQRVTLLAIDGGGIRGLIPGTILAFLEARLQELDGPDARLADYFDCIAGTSTGGLITAMLAAPGDHGRPLFAASDINRFYLDNGPRIFPQKRCGMAAAMAALTRPRYNGKYLQGKIRKMLGETRVRDTLTNVVIPTFDVRLLQPTIFSTYDAKSMPLKNALLSDICISTSAAPTYLPAHCFQTTDDATGKVREFDLIDGGVAANNPTMVAMTQITKKIMVKDKEELYPVKPSDCGKFLVLSLGTGSTSDQGMYTARQCSRWGIVRWLRNKGMAPIIDIFMAASSDLVDIHAAVMFQSLHSDGDYLRIQDNTLHGDAATVDAATRDNMRALVGIGERMLAQRVSRVNVETGRYVEVPGAGSNADALRGFARQLSEERRARLGRRNACGGGGEGEPSGVACKR.

In terms of domain architecture, PNPLA spans 20-224; sequence LAIDGGGIRG…AANNPTMVAM (205 aa). Residues 24–29 carry the GXGXXG motif; that stretch reads GGGIRG. Positions 62 to 66 match the GXSXG motif; that stretch reads GTSTG. The Nucleophile role is filled by Ser-64. The active-site Proton acceptor is the Asp-211. Residues 211 to 213 carry the DGA/G motif; the sequence is DGG.

This sequence belongs to the patatin family.

In terms of biological role, possesses non-specific lipolytic acyl hydrolase (LAH) activity. Hydrolyzes phospholipids as well as galactolipids. May play a role in disease resistance. This Oryza sativa subsp. indica (Rice) protein is Patatin-like protein 1 (PLP1).